The following is a 204-amino-acid chain: Dephospho-CoA kinase (204 aa).

The DPCK domain occupies 3–204 (VIGLTGGIGS…DRLDLAYRAH (202 aa)). 11–16 (GSGKSY) is a binding site for ATP.

The protein belongs to the CoaE family.

It is found in the cytoplasm. The enzyme catalyses 3'-dephospho-CoA + ATP = ADP + CoA + H(+). It participates in cofactor biosynthesis; coenzyme A biosynthesis; CoA from (R)-pantothenate: step 5/5. Its function is as follows. Catalyzes the phosphorylation of the 3'-hydroxyl group of dephosphocoenzyme A to form coenzyme A. This is Dephospho-CoA kinase from Ralstonia nicotianae (strain ATCC BAA-1114 / GMI1000) (Ralstonia solanacearum).